Reading from the N-terminus, the 525-residue chain is GMP synthase [glutamine-hydrolyzing] (525 aa).

The Glutamine amidotransferase type-1 domain occupies arginine 9 to leucine 207. Cysteine 86 acts as the Nucleophile in catalysis. Residues histidine 181 and glutamate 183 contribute to the active site. The 193-residue stretch at tryptophan 208–arginine 400 folds into the GMPS ATP-PPase domain. Serine 235–serine 241 lines the ATP pocket.

In terms of assembly, homodimer.

The catalysed reaction is XMP + L-glutamine + ATP + H2O = GMP + L-glutamate + AMP + diphosphate + 2 H(+). The protein operates within purine metabolism; GMP biosynthesis; GMP from XMP (L-Gln route): step 1/1. Catalyzes the synthesis of GMP from XMP. The chain is GMP synthase [glutamine-hydrolyzing] from Pseudomonas savastanoi pv. phaseolicola (strain 1448A / Race 6) (Pseudomonas syringae pv. phaseolicola (strain 1448A / Race 6)).